The sequence spans 262 residues: Hemin import ATP-binding protein HmuV (262 aa).

The region spanning 3–244 (LQARNLTLAR…DHMRRVYGIE (242 aa)) is the ABC transporter domain. 35-42 (GANGAGKS) lines the ATP pocket.

Belongs to the ABC transporter superfamily. Heme (hemin) importer (TC 3.A.1.14.5) family. As to quaternary structure, the complex is composed of two ATP-binding proteins (HmuV), two transmembrane proteins (HmuU) and a solute-binding protein (HmuT).

The protein localises to the cell inner membrane. Functionally, part of the ABC transporter complex HmuTUV involved in hemin import. Responsible for energy coupling to the transport system. The protein is Hemin import ATP-binding protein HmuV of Bordetella parapertussis (strain 12822 / ATCC BAA-587 / NCTC 13253).